A 555-amino-acid polypeptide reads, in one-letter code: Cytochrome P450 monooxygenase abl2 (555 aa).

A run of 2 helical transmembrane segments spans residues 38–58 and 141–161; these read SFDL…ALFI and VFIG…APLA. N-linked (GlcNAc...) asparagine glycans are attached at residues N325 and N360. C489 provides a ligand contact to heme.

Belongs to the cytochrome P450 family. The cofactor is heme.

It is found in the membrane. It functions in the pathway hormone biosynthesis. Its function is as follows. Cytochrome P450 monooxygenase; part of the gene cluster that mediates the biosynthesis of abscisic acid (ABA), a phytohormone that acts antagonistically toward salicylic acid (SA), jasmonic acid (JA) and ethylene (ETH) signaling, to impede plant defense responses. The first step of the pathway catalyzes the reaction from farnesyl diphosphate to alpha-ionylideneethane performed by the alpha-ionylideneethane synthase abl3 via a three-step reaction mechanism involving 2 neutral intermediates, beta-farnesene and allofarnesene. The cytochrome P450 monooxygenase abl1 might then be involved in the conversion of alpha-ionylideneethane to alpha-ionylideneacetic acid. Alpha-ionylideneacetic acid is further converted to abscisic acid in 2 steps involving the cytochrome P450 monooxygenase abl2 and the short-chain dehydrogenase/reductase abl4, via the intermediates 1'-deoxy-ABA or 1',4'-trans-diol-ABA, depending on the order of action of these 2 enzymes. Abl2 is responsible for the hydroxylation of carbon atom C-1' and abl4 might be involved in the oxidation of the C-4' carbon atom. This is Cytochrome P450 monooxygenase abl2 from Leptosphaeria maculans (strain JN3 / isolate v23.1.3 / race Av1-4-5-6-7-8) (Blackleg fungus).